A 245-amino-acid chain; its full sequence is Putative insertion sequence ATP-binding protein y4pL (245 aa).

Residue 106–113 coordinates ATP; sequence GPSGVGKS.

The protein belongs to the IS21/IS1162 putative ATP-binding protein family.

The protein is Putative insertion sequence ATP-binding protein y4pL of Sinorhizobium fredii (strain NBRC 101917 / NGR234).